The sequence spans 785 residues: MDFSRLHMYSPPQCVPENTGYTYALSSSYSSDALDFETEHKLDPVFDSPRMSRRSLRLATTACTLGDGEAVGADSGTSSAVSLKNRAARTTKQRRSTNKSAFSINHVSRQVTSSGVSHGGTVSLQDAVTRRPPVLDESWIREQTTVDHFWGLDDDGDLKGGNKAAIQGNGDVGAAAATAHNGFSCSNCSMLSERKDVLTAHPAAPGPVSRVYSRDRNQKCYFLLQILRRIGAVGQAVSRTAWSALWLAVVAPGKAASGVFWWLGIGWYQFVTLISWLNVFLLTRCLRNICKFLVLLIPLFLLLAGLSLRGQGNFFSFLPVLNWASMHRTQRVDDPQDVFKPTTSRLKQPLQGDSEAFPWHWMSGVEQQVASLSGQCHHHGENLRELTTLLQKLQARVDQMEGGAAGPSASVRDAVGQPPRETDFMAFHQEHEVRMSHLEDILGKLREKSEAIQKELEQTKQKTISAVGEQLLPTVEHLQLELDQLKSELSSWRHVKTGCETVDAVQERVDVQVREMVKLLFSEDQQGGSLEQLLQRFSSQFVSKGDLQTMLRDLQLQILRNVTHHVSVTKQLPTSEAVVSAVSEAGASGITEAQARAIVNSALKLYSQDKTGMVDFALESGGGSILSTRCSETYETKTALMSLFGIPLWYFSQSPRVVIQPDIYPGNCWAFKGSQGYLVVRLSMMIHPAAFTLEHIPKTLSPTGNISSAPKDFAVYGLENEYQEEGQLLGQFTYDQDGESLQMFQALKRPDDTAFQIVELRIFSNWGHPEYTCLYRFRVHGEPVK.

The interval 1 to 138 (MDFSRLHMYS…TRRPPVLDES (138 aa)) is LMNA-binding. Topologically, residues 1–288 (MDFSRLHMYS…VFLLTRCLRN (288 aa)) are nuclear. 3 positions are modified to phosphoserine: Ser-48, Ser-100, and Ser-138. Lys-195 participates in a covalent cross-link: Glycyl lysine isopeptide (Lys-Gly) (interchain with G-Cter in SUMO2). An SYNE2-binding region spans residues 209-309 (SRVYSRDRNQ…FLLLAGLSLR (101 aa)). The EMD-binding stretch occupies residues 223–309 (LLQILRRIGA…FLLLAGLSLR (87 aa)). The chain crosses the membrane as a helical span at residues 289–308 (ICKFLVLLIPLFLLLAGLSL). Topologically, residues 309–785 (RGQGNFFSFL…RFRVHGEPVK (477 aa)) are perinuclear space. 2 positions are modified to phosphoserine: Asp-333 and Ser-344. The stretch at 428–495 (HQEHEVRMSH…KSELSSWRHV (68 aa)) forms a coiled coil. The interval 574 to 785 (TSEAVVSAVS…RFRVHGEPVK (212 aa)) is sufficient for interaction with SYNE1 and SYNE2. One can recognise an SUN domain in the interval 622-784 (GGSILSTRCS…YRFRVHGEPV (163 aa)).

In terms of assembly, core component of the LINC complex which is composed of inner nuclear membrane SUN domain-containing proteins coupled to outer nuclear membrane KASH domain-containing nesprins. SUN and KASH domain-containing proteins seem to bind each other promiscuously; however, differentially expression of LINC complex constituents is giving rise to specific assemblies. At least SUN1/2-containing core LINC complexes are proposed to be hexameric composed of three protomers of each KASH and SUN domain-containing protein. Interacts with KASH5 (via the last 22 amino acids); this interaction mediates KASH5 telomere localization by forming a SUN1:KASH5 LINC complex. May interact with SYNE3. Interacts with SYNE2 and SYNE1; probably forming respective LINC complexes. Interacts with A-type lamin with a strong preference for unprocessed A-type lamin compared with the mature protein. Interaction with lamins B1 and C is hardly detectable. Interacts with NAT10. Interacts with EMD and TSNAX. Associates with the nuclear pore complex (NPC). Interacts with CCDC79/TERB1; promoting the accumulation of the LINC complex complexes at the telomere-nuclear envelope attachment sites. Interacts (via KASH domain) with TMEM258. In terms of processing, the disulfide bond with KASH domain-containing nesprins is required for stability of the respective LINC complexes under tensile forces.

The protein resides in the nucleus inner membrane. Functionally, as a component of the LINC (LInker of Nucleoskeleton and Cytoskeleton) complex involved in the connection between the nuclear lamina and the cytoskeleton. The nucleocytoplasmic interactions established by the LINC complex play an important role in the transmission of mechanical forces across the nuclear envelope and in nuclear movement and positioning. Required for interkinetic nuclear migration (INM) and essential for nucleokinesis and centrosome-nucleus coupling during radial neuronal migration in the cerebral cortex and during glial migration. Involved in telomere attachment to nuclear envelope in the prophase of meiosis implicating a SUN1/2:KASH5 LINC complex in which SUN1 and SUN2 seem to act at least partial redundantly. Required for gametogenesis and involved in selective gene expression of coding and non-coding RNAs needed for gametogenesis. Helps to define the distribution of nuclear pore complexes (NPCs). Required for efficient localization of SYNE4 in the nuclear envelope. May be involved in nuclear remodeling during sperm head formation in spermatogenesis. May play a role in DNA repair by suppressing non-homologous end joining repair to facilitate the repair of DNA cross-links. This chain is SUN domain-containing protein 1, found in Homo sapiens (Human).